Consider the following 92-residue polypeptide: Large ribosomal subunit protein bL27 (92 aa).

The tract at residues 1–22 (MAHTKAGGSTRNGRDSRGQRLG) is disordered.

This sequence belongs to the bacterial ribosomal protein bL27 family.

The chain is Large ribosomal subunit protein bL27 from Mycoplasmopsis agalactiae (strain NCTC 10123 / CIP 59.7 / PG2) (Mycoplasma agalactiae).